The primary structure comprises 611 residues: tRNA uridine 5-carboxymethylaminomethyl modification enzyme MnmG (611 aa).

FAD-binding positions include 8–13 (GAGHAG), valine 120, and serine 175. Residue 268-282 (GPRYCPSIEDKIVRF) participates in NAD(+) binding. Glutamine 365 is an FAD binding site.

The protein belongs to the MnmG family. In terms of assembly, homodimer. Heterotetramer of two MnmE and two MnmG subunits. Requires FAD as cofactor.

It is found in the cytoplasm. NAD-binding protein involved in the addition of a carboxymethylaminomethyl (cmnm) group at the wobble position (U34) of certain tRNAs, forming tRNA-cmnm(5)s(2)U34. This is tRNA uridine 5-carboxymethylaminomethyl modification enzyme MnmG from Mycoplasmoides gallisepticum (strain R(low / passage 15 / clone 2)) (Mycoplasma gallisepticum).